The primary structure comprises 636 residues: Fructose-1,6-bisphosphatase class 3 (636 aa).

It belongs to the FBPase class 3 family. Mn(2+) serves as cofactor.

The catalysed reaction is beta-D-fructose 1,6-bisphosphate + H2O = beta-D-fructose 6-phosphate + phosphate. It functions in the pathway carbohydrate biosynthesis; gluconeogenesis. The chain is Fructose-1,6-bisphosphatase class 3 from Streptococcus sanguinis (strain SK36).